The following is a 554-amino-acid chain: Wee1-like protein kinase 2-B (554 aa).

2 disordered regions span residues 1-86 (MRMA…GGEC) and 145-182 (TLVN…DSQM). Position 38 is a phosphoserine (S38). Polar residues-rich tracts occupy residues 38–48 (SPVSSWRTNNC) and 147–163 (VNVN…THFQ). In terms of domain architecture, Protein kinase spans 213 to 487 (FLEIEKIGAG…AKNSVLRRCV (275 aa)). Residues 219–227 (IGAGEFGSV) and K242 contribute to the ATP site. The Proton acceptor role is filled by D340. Mg(2+) is bound by residues N345 and D377. Positions 490 to 516 (AAELQKQLNVEKFKTAMLERELQAAKL) form a coiled coil.

This sequence belongs to the protein kinase superfamily. Ser/Thr protein kinase family. WEE1 subfamily. Interacts with cdca3. Ubiquitinated and degraded at the onset of G2/M phase. In terms of processing, phosphorylated during M and G1 phases. Interacts with cdca3 when phosphorylated at Ser-38.

The protein resides in the nucleus. The enzyme catalyses L-tyrosyl-[protein] + ATP = O-phospho-L-tyrosyl-[protein] + ADP + H(+). Its function is as follows. Oocyte and early embryo-specific protein tyrosine kinase that phosphorylates and inhibits cdk1 and acts as a regulator of meiosis in oocytes. Required to ensure the meiotic cell cycle in oocytes by phosphorylating cdk1 at 'Tyr-15', leading to inhibit cdk1 activity and prevent meiosis. In Xenopus laevis (African clawed frog), this protein is Wee1-like protein kinase 2-B (wee2-b).